The primary structure comprises 228 residues: Sliding clamp (228 aa).

Belongs to the Tevenvirinae sliding clamp family. In terms of assembly, homotrimer. Interacts with the viral DNA polymerase; this interaction constitutes the polymerase holoenzyme. Interacts with the sliding-clamp-loader; this interaction allows the sliding-clamp-loader to open the sliding clamp. Interacts with the viral DNA ligase. Part of the replicase complex that includes the DNA polymerase, the polymerase clamp, the clamp loader complex, the single-stranded DNA binding protein, the primase, the helicase and the helicase assembly factor. Interacts with the viral RNA polymerase (RNAP). Part of the transcription activation complex containing host RNAP, the viral RNA polymerase sigma-like factor, the late transcription coactivator, and the sliding clamp.

Functionally, sliding clamp that encircles the genomic DNA and links the DNA polymerase to the template to control the processivity of DNA synthesis. Responsible for tethering the catalytic subunit of DNA polymerase to DNA during high-speed replication. Interaction with the sliding-clamp-loader opens the sliding clamp so that it can be loaded around the DNA template. During transcription, encircles the DNA and tethers host RNA polymerase (RNAP) to it. This is Sliding clamp (45) from Escherichia coli (Bacteriophage RB69).